The sequence spans 88 residues: Small ribosomal subunit protein bS20 (88 aa).

A disordered region spans residues 1 to 21; the sequence is MANTTSAKKATRKIARRTAVN.

The protein belongs to the bacterial ribosomal protein bS20 family.

Its function is as follows. Binds directly to 16S ribosomal RNA. In Agrobacterium fabrum (strain C58 / ATCC 33970) (Agrobacterium tumefaciens (strain C58)), this protein is Small ribosomal subunit protein bS20.